A 431-amino-acid chain; its full sequence is tRNA(Ile)-lysidine synthase (431 aa).

19 to 24 (STGIDS) provides a ligand contact to ATP.

It belongs to the tRNA(Ile)-lysidine synthase family.

It is found in the cytoplasm. The enzyme catalyses cytidine(34) in tRNA(Ile2) + L-lysine + ATP = lysidine(34) in tRNA(Ile2) + AMP + diphosphate + H(+). Functionally, ligates lysine onto the cytidine present at position 34 of the AUA codon-specific tRNA(Ile) that contains the anticodon CAU, in an ATP-dependent manner. Cytidine is converted to lysidine, thus changing the amino acid specificity of the tRNA from methionine to isoleucine. This is tRNA(Ile)-lysidine synthase from Staphylococcus aureus (strain Mu50 / ATCC 700699).